The sequence spans 790 residues: Solute carrier family 26 member 9 (790 aa).

The Cytoplasmic segment spans residues 1-70 (MNQPRPRYVV…WLPKYKIKDY (70 aa)). Residues 71–96 (IIPDLLGGLSGGCIQVPQGMAFALLA) form a helical membrane-spanning segment. At 97–100 (NLPA) the chain is on the extracellular side. Residues 101–109 (VNGLYSSFF) traverse the membrane as a helical segment. Over 110-129 (PLLTYFFLGGIHQMVPGTFA) the chain is Cytoplasmic. The helical transmembrane segment at 130–142 (VISILVGNICLQL) threads the bilayer. The Extracellular segment spans residues 143 to 162 (APESKFQIFNNVTNETYVDT). The chain crosses the membrane as a helical span at residues 163 to 191 (AAMEAERLHVSATLACLTAVIQMALGFMQ). Over 192–201 (FGFVAIYLSE) the chain is Cytoplasmic. A helical transmembrane segment spans residues 202 to 224 (SFIRGFMTAAGLQILISVLKYIF). At 225 to 237 (GLTIPSYTGPGSI) the chain is on the extracellular side. The helical intramembrane region spans 238–246 (VFTFIDICK). At 247 to 254 (NLPHTNIA) the chain is on the extracellular side. A helical membrane pass occupies residues 255 to 275 (SLIFALVSGVFLVLVKELNAR). Over 276–286 (YMHKIHFPIPT) the chain is Cytoplasmic. The helical transmembrane segment at 287-299 (EMIVVVVATAISG) threads the bilayer. Residues 300 to 334 (SCKMPKKYHMQIVGEIRQGFPTPVAPMVSQWKGMV) lie on the Extracellular side of the membrane. Residues 335 to 358 (GTAFSLAIVGYVINLAMGRTLASK) traverse the membrane as a helical segment. Topologically, residues 359–365 (HGYDVDS) are cytoplasmic. The helical transmembrane segment at 366 to 379 (NQEMIALGCSNFFG) threads the bilayer. The Extracellular segment spans residues 380–390 (SFFKIHVICCA). A helical transmembrane segment spans residues 391–400 (LSVTLAVDGA). Residues 401 to 405 (GGKSQ) lie on the Cytoplasmic side of the membrane. Residues 406–419 (VASLCVSLVVMITM) form a helical membrane-spanning segment. The Extracellular portion of the chain corresponds to 420-431 (LVLGSYLYPLPK). The helical transmembrane segment at 432–457 (AVLGALIAVNLKNSLKQLTDPYYLWR) threads the bilayer. The Cytoplasmic segment spans residues 458-461 (KSKL). Residues 462–476 (DCCVWVVSFLSSFFL) traverse the membrane as a helical segment. Residues 477-479 (SLP) are Extracellular-facing. A helical transmembrane segment spans residues 480-498 (YGVAVGVAFSILVVIFQTQ). Over 499-790 (FRNGSTLAQV…MFHTETLTAL (292 aa)) the chain is Cytoplasmic. In terms of domain architecture, STAS spans 519–737 (TYNRAQEIAG…PSIHDAVLFA (219 aa)).

This sequence belongs to the SLC26A/SulP transporter (TC 2.A.53) family. In terms of assembly, homodimer. As to expression, expressed in stomach and trachea. Abundantly expressed in the apical domain of the surface epithelial cells and the deep cells in the gastric gland. Also expressed in heart, brain, lung and liver.

It is found in the cell membrane. The protein resides in the endomembrane system. The enzyme catalyses chloride(in) = chloride(out). It catalyses the reaction hydrogencarbonate(in) + chloride(out) = hydrogencarbonate(out) + chloride(in). Inhibited by ammonium and thiosulfate. Its function is as follows. Ion transporter that can act both as an ion channel and anion exchanger. Mainly acts as a chloride channel, which mediate uncoupled chloride anion transport in an alternate-access mechanism where a saturable binding site is alternately exposed to either one or the other side of the membrane. Also acts as a DIDS- and thiosulfate- sensitive anion exchanger the exchange of chloride for bicarbonate ions across the cell membrane. The chain is Solute carrier family 26 member 9 from Mus musculus (Mouse).